A 238-amino-acid chain; its full sequence is uncharacterized protein (238 aa).

Helical transmembrane passes span 75–95 (YAIFHIFLPFILTLLLYHNFY), 116–136 (IVLIFTYVMTVIIVYFSFSLI), and 172–192 (IQGLAHIILSLLLFILGLEVI). The segment at 200–238 (DVEMSSMRGQAITTEPASDNTMAEETDCNTSKDVESGSN) is disordered. A compositionally biased stretch (polar residues) spans 206-220 (MRGQAITTEPASDNT). Residues 229 to 238 (TSKDVESGSN) are compositionally biased toward basic and acidic residues.

The protein localises to the membrane. This is an uncharacterized protein from Schizosaccharomyces pombe (strain 972 / ATCC 24843) (Fission yeast).